We begin with the raw amino-acid sequence, 481 residues long: Glutamate--tRNA ligase (481 aa).

The 'HIGH' region signature appears at 9-19 (PSPTGNLHIGT). A 'KMSKS' region motif is present at residues 247–251 (KLSKR). Lys-250 serves as a coordination point for ATP.

It belongs to the class-I aminoacyl-tRNA synthetase family. Glutamate--tRNA ligase type 1 subfamily. In terms of assembly, monomer.

It is found in the cytoplasm. It catalyses the reaction tRNA(Glu) + L-glutamate + ATP = L-glutamyl-tRNA(Glu) + AMP + diphosphate. In terms of biological role, catalyzes the attachment of glutamate to tRNA(Glu) in a two-step reaction: glutamate is first activated by ATP to form Glu-AMP and then transferred to the acceptor end of tRNA(Glu). The polypeptide is Glutamate--tRNA ligase (Nostoc punctiforme (strain ATCC 29133 / PCC 73102)).